Here is a 423-residue protein sequence, read N- to C-terminus: MARKKIREYDSKRLVKEHFKRLSGQELPIRSVQINQETDLNELVEREPWLSSEKLVVKPDMLFGKRGKSGLVALNLDFADVATFVKERLGKEVEMSGCKGPITTFIVEPFVPHNEEFYLNIVSDRLGCSISFSECGGIDIEENWDKVKTITIPTGASLTFEICAPLVATLPLEIKGELEDFIQVIFTLFEDLDFTFLEMNPFTLVDGKPYPLDMRGELDDTAAFKNFKKWGDIEFPMPFGRVMSSTESFIHGLDEKTSASLKFTVLNPKGRIWTMVAGGGASVIYADTVGDLGYASELGNYAEYSGAPKEDEVLQYARVVIDCATANPDGKSRALVIGGGIANFTDVAATFNGIIRALKEKEAKLKAARMHIFVRRGGPNYQKGLAKMRSLGDEIGVPIEVYGPEATMTGICKEAIQYITAAA.

Residues N343, T345, and R376 each contribute to the citrate site.

Belongs to the succinate/malate CoA ligase beta subunit family. Heterooctamer of 4 alpha and 4 beta chains.

It localises to the cytoplasm. The protein resides in the cytosol. The catalysed reaction is oxaloacetate + acetyl-CoA + ADP + phosphate = citrate + ATP + CoA. Functionally, ATP citrate-lyase is the primary enzyme responsible for the synthesis of cytosolic acetyl-CoA, used for the elongation of fatty acids and biosynthesis of isoprenoids, flavonoids and malonated derivatives. May supply substrate to the cytosolic acetyl-CoA carboxylase, which generates the malonyl-CoA used for the synthesis of a multitude of compounds, including very long chain fatty acids and flavonoids. Required for normal growth and development and elongation of C18 fatty acids to C20 to C24 fatty acids in seeds. In contrast to all known animal ACL enzymes having a homomeric structure, plant ACLs are composed of alpha and beta chains. The sequence is that of ATP-citrate synthase alpha chain protein 2 (ACLA-2) from Arabidopsis thaliana (Mouse-ear cress).